The primary structure comprises 387 residues: MDLFEYQAKELFAKHNVPTTPGRVTDTAEDAKAIAEEIGKPVMVKAQVKVGGRGKAGGVKYAATADDAFTHAQNILGLDIKGHVVKKLLVAEASDIAEEYYISFLLDRANRTYLAMCSVEGGVEIEEVAATKPDRLARIPVDATKGVDEAFAREIAEKGHLPAEVLDAAAVTIAKLWEVFVGEDATLVEVNPLVRTPDDQILALDGKVTLDANADFRHPEHAEFEDRDATDPLELKAKENDLNYVKLDGQVGIIGNGAGLVMSTLDVVAYAGEKHNGVKPANFLDIGGGASAEVMANGLDVILNDSQVKSVFVNVFGGITACDAVANGIVKALEILGEEANKPLVVRLDGNRVEEGRKILADANHPLVVLAQTMDEGADKAAELANK.

The region spanning 9–236 (KELFAKHNVP…RDATDPLELK (228 aa)) is the ATP-grasp domain. ATP contacts are provided by residues K45, 52–54 (GRG), S94, and E99. N191 and D205 together coordinate Mg(2+). Residues N256 and 318-320 (GIT) contribute to the substrate site.

It belongs to the succinate/malate CoA ligase beta subunit family. In terms of assembly, heterotetramer of two alpha and two beta subunits. The cofactor is Mg(2+).

The catalysed reaction is succinate + ATP + CoA = succinyl-CoA + ADP + phosphate. It carries out the reaction GTP + succinate + CoA = succinyl-CoA + GDP + phosphate. The protein operates within carbohydrate metabolism; tricarboxylic acid cycle; succinate from succinyl-CoA (ligase route): step 1/1. In terms of biological role, succinyl-CoA synthetase functions in the citric acid cycle (TCA), coupling the hydrolysis of succinyl-CoA to the synthesis of either ATP or GTP and thus represents the only step of substrate-level phosphorylation in the TCA. The beta subunit provides nucleotide specificity of the enzyme and binds the substrate succinate, while the binding sites for coenzyme A and phosphate are found in the alpha subunit. The chain is Succinate--CoA ligase [ADP-forming] subunit beta from Mycobacterium sp. (strain JLS).